The sequence spans 540 residues: Phosphoenolpyruvate carboxykinase (ATP) (540 aa).

Substrate is bound at residue R65. K87 is subject to N6-acetyllysine. Substrate-binding residues include Y207 and K213. ATP is bound by residues K213, H232, and 248–256 (GLSGTGKTT). Mn(2+) contacts are provided by K213 and H232. D269 lines the Mn(2+) pocket. ATP contacts are provided by residues E297, R333, 449–450 (RI), and T455. R333 serves as a coordination point for substrate. The residue at position 523 (K523) is an N6-acetyllysine.

The protein belongs to the phosphoenolpyruvate carboxykinase (ATP) family. In terms of assembly, monomer. Mn(2+) serves as cofactor.

It is found in the cytoplasm. The catalysed reaction is oxaloacetate + ATP = phosphoenolpyruvate + ADP + CO2. Its pathway is carbohydrate biosynthesis; gluconeogenesis. Involved in the gluconeogenesis. Catalyzes the conversion of oxaloacetate (OAA) to phosphoenolpyruvate (PEP) through direct phosphoryl transfer between the nucleoside triphosphate and OAA. In Escherichia coli O127:H6 (strain E2348/69 / EPEC), this protein is Phosphoenolpyruvate carboxykinase (ATP).